The following is a 238-amino-acid chain: Sugar fermentation stimulation protein homolog (238 aa).

This sequence belongs to the SfsA family.

In Vibrio vulnificus (strain YJ016), this protein is Sugar fermentation stimulation protein homolog.